We begin with the raw amino-acid sequence, 347 residues long: Quinolinate synthase (347 aa).

Iminosuccinate is bound by residues His-47 and Ser-68. Cys-113 contributes to the [4Fe-4S] cluster binding site. Iminosuccinate contacts are provided by residues 139-141 and Ser-156; that span reads YAN. Cys-200 contributes to the [4Fe-4S] cluster binding site. Iminosuccinate contacts are provided by residues 226-228 and Thr-243; that span reads HPE. A [4Fe-4S] cluster-binding site is contributed by Cys-297.

The protein belongs to the quinolinate synthase family. Type 1 subfamily. [4Fe-4S] cluster serves as cofactor.

The protein localises to the cytoplasm. The catalysed reaction is iminosuccinate + dihydroxyacetone phosphate = quinolinate + phosphate + 2 H2O + H(+). It participates in cofactor biosynthesis; NAD(+) biosynthesis; quinolinate from iminoaspartate: step 1/1. Functionally, catalyzes the condensation of iminoaspartate with dihydroxyacetone phosphate to form quinolinate. This is Quinolinate synthase from Shigella flexneri serotype 5b (strain 8401).